Consider the following 202-residue polypeptide: MTYFLGLTGGIATGKTTVSQMLAQQGIPIIDGDQVAHQVLANNQSVQAQIQATFGKQLVQDGQVDRAALGKLVFGNQAALAQLNAITAPVIRETIMTEMVQAKAHQVPLVVLDLPLLYEQHYETVCDGVLVVYLPVEKQLARLMARNQLSREDALKRINSQASLAEKRDRADFVIDNQGSLDQLKAQLKTVLEGVCHKSGMS.

The DPCK domain maps to phenylalanine 4–serine 202. ATP is bound at residue alanine 12–threonine 17.

This sequence belongs to the CoaE family.

The protein localises to the cytoplasm. It carries out the reaction 3'-dephospho-CoA + ATP = ADP + CoA + H(+). The protein operates within cofactor biosynthesis; coenzyme A biosynthesis; CoA from (R)-pantothenate: step 5/5. Its function is as follows. Catalyzes the phosphorylation of the 3'-hydroxyl group of dephosphocoenzyme A to form coenzyme A. In Latilactobacillus sakei subsp. sakei (strain 23K) (Lactobacillus sakei subsp. sakei), this protein is Dephospho-CoA kinase.